We begin with the raw amino-acid sequence, 1073 residues long: Carbamoyl phosphate synthase large chain (1073 aa).

Residues 1–403 (MPKRTDIKSI…SLQKALRGLE (403 aa)) are carboxyphosphate synthetic domain. ATP-binding residues include R129, R169, G175, G176, E208, L210, E215, G241, V242, H243, Q285, and E299. The region spanning 133 to 328 (DKAMKSIGLA…IARVAAKLAV (196 aa)) is the ATP-grasp 1 domain. Residues Q285, E299, and N301 each coordinate Mg(2+). Residues Q285, E299, and N301 each contribute to the Mn(2+) site. Residues 404 to 553 (VGVCGLDPKL…YSTYEEECEA (150 aa)) are oligomerization domain. Residues 554–935 (NPSTRDKIMI…AFAKAQMGAS (382 aa)) form a carbamoyl phosphate synthetic domain region. An ATP-grasp 2 domain is found at 678-869 (QQMVERLNLR…LAMIAARVMA (192 aa)). The ATP site is built by R714, H753, L755, E760, G785, V786, H787, S788, Q828, and E840. Mg(2+)-binding residues include Q828, E840, and N842. Residues Q828, E840, and N842 each contribute to the Mn(2+) site. The region spanning 936 to 1073 (EVLPTGGTAF…LQDLHAGLKA (138 aa)) is the MGS-like domain. Residues 936 to 1073 (EVLPTGGTAF…LQDLHAGLKA (138 aa)) are allosteric domain.

The protein belongs to the CarB family. As to quaternary structure, composed of two chains; the small (or glutamine) chain promotes the hydrolysis of glutamine to ammonia, which is used by the large (or ammonia) chain to synthesize carbamoyl phosphate. Tetramer of heterodimers (alpha,beta)4. Mg(2+) is required as a cofactor. It depends on Mn(2+) as a cofactor.

It carries out the reaction hydrogencarbonate + L-glutamine + 2 ATP + H2O = carbamoyl phosphate + L-glutamate + 2 ADP + phosphate + 2 H(+). It catalyses the reaction hydrogencarbonate + NH4(+) + 2 ATP = carbamoyl phosphate + 2 ADP + phosphate + 2 H(+). The protein operates within amino-acid biosynthesis; L-arginine biosynthesis; carbamoyl phosphate from bicarbonate: step 1/1. Its pathway is pyrimidine metabolism; UMP biosynthesis via de novo pathway; (S)-dihydroorotate from bicarbonate: step 1/3. In terms of biological role, large subunit of the glutamine-dependent carbamoyl phosphate synthetase (CPSase). CPSase catalyzes the formation of carbamoyl phosphate from the ammonia moiety of glutamine, carbonate, and phosphate donated by ATP, constituting the first step of 2 biosynthetic pathways, one leading to arginine and/or urea and the other to pyrimidine nucleotides. The large subunit (synthetase) binds the substrates ammonia (free or transferred from glutamine from the small subunit), hydrogencarbonate and ATP and carries out an ATP-coupled ligase reaction, activating hydrogencarbonate by forming carboxy phosphate which reacts with ammonia to form carbamoyl phosphate. The polypeptide is Carbamoyl phosphate synthase large chain (Pseudomonas syringae pv. tomato (strain ATCC BAA-871 / DC3000)).